Consider the following 143-residue polypeptide: Large-conductance mechanosensitive channel (143 aa).

2 consecutive transmembrane segments (helical) span residues 10 to 30 (FAVK…GAFS) and 89 to 109 (GSFI…FLMV).

This sequence belongs to the MscL family. In terms of assembly, homopentamer.

The protein localises to the cell inner membrane. Its function is as follows. Channel that opens in response to stretch forces in the membrane lipid bilayer. May participate in the regulation of osmotic pressure changes within the cell. This Burkholderia pseudomallei (strain 668) protein is Large-conductance mechanosensitive channel.